Consider the following 109-residue polypeptide: Co-chaperonin GroES (109 aa).

Belongs to the GroES chaperonin family. Heptamer of 7 subunits arranged in a ring. Interacts with the chaperonin GroEL.

The protein resides in the cytoplasm. Its function is as follows. Together with the chaperonin GroEL, plays an essential role in assisting protein folding. The GroEL-GroES system forms a nano-cage that allows encapsulation of the non-native substrate proteins and provides a physical environment optimized to promote and accelerate protein folding. GroES binds to the apical surface of the GroEL ring, thereby capping the opening of the GroEL channel. In Methanosarcina acetivorans (strain ATCC 35395 / DSM 2834 / JCM 12185 / C2A), this protein is Co-chaperonin GroES.